Consider the following 590-residue polypeptide: Aspartate--tRNA(Asp/Asn) ligase (590 aa).

An L-aspartate-binding site is contributed by E169. The aspartate stretch occupies residues 193–196; it reads QLFK. R215 is an L-aspartate binding site. ATP is bound by residues 215-217 and Q224; that span reads RDE. Residue H447 coordinates L-aspartate. Position 479 (E479) interacts with ATP. R486 is an L-aspartate binding site. ATP is bound at residue 531 to 534; the sequence is GWDR. Positions 556 to 590 are disordered; sequence GGFDPLTAAPAPITPEQRKEAGVDARPQQDLPPQS.

Belongs to the class-II aminoacyl-tRNA synthetase family. Type 1 subfamily. Homodimer.

It localises to the cytoplasm. It catalyses the reaction tRNA(Asx) + L-aspartate + ATP = L-aspartyl-tRNA(Asx) + AMP + diphosphate. In terms of biological role, aspartyl-tRNA synthetase with relaxed tRNA specificity since it is able to aspartylate not only its cognate tRNA(Asp) but also tRNA(Asn). Reaction proceeds in two steps: L-aspartate is first activated by ATP to form Asp-AMP and then transferred to the acceptor end of tRNA(Asp/Asn). This Nocardioides sp. (strain ATCC BAA-499 / JS614) protein is Aspartate--tRNA(Asp/Asn) ligase.